We begin with the raw amino-acid sequence, 660 residues long: Acetyl-coenzyme A synthetase (660 aa).

Residues R197 to K200 and T317 contribute to the CoA site. Residues G397–P399, D421–T426, D512, and R528 contribute to the ATP site. S536 contacts CoA. Position 539 (R539) interacts with ATP. Mg(2+) contacts are provided by V550 and V555. At K625 the chain carries N6-acetyllysine.

It belongs to the ATP-dependent AMP-binding enzyme family. Requires Mg(2+) as cofactor. Acetylated. Deacetylation by the SIR2-homolog deacetylase activates the enzyme.

It catalyses the reaction acetate + ATP + CoA = acetyl-CoA + AMP + diphosphate. Its function is as follows. Catalyzes the conversion of acetate into acetyl-CoA (AcCoA), an essential intermediate at the junction of anabolic and catabolic pathways. AcsA undergoes a two-step reaction. In the first half reaction, AcsA combines acetate with ATP to form acetyl-adenylate (AcAMP) intermediate. In the second half reaction, it can then transfer the acetyl group from AcAMP to the sulfhydryl group of CoA, forming the product AcCoA. The protein is Acetyl-coenzyme A synthetase of Paraburkholderia phymatum (strain DSM 17167 / CIP 108236 / LMG 21445 / STM815) (Burkholderia phymatum).